Here is a 721-residue protein sequence, read N- to C-terminus: Polyribonucleotide nucleotidyltransferase (721 aa).

Asp495 and Asp501 together coordinate Mg(2+). Positions 562–621 constitute a KH domain; sequence PRLLSFRIDPELIGTVIGPGGRTIKGITERTNTKIDIEDSGIVTIASHDGAAADEAQKII. The S1 motif domain maps to 631–699; that stretch reads GEVFSGSITR…NRGRINLTLR (69 aa). Residues 698 to 721 are disordered; sequence LRGVPQSGDGAGEEPQPTPVAPLS.

This sequence belongs to the polyribonucleotide nucleotidyltransferase family. Requires Mg(2+) as cofactor.

It is found in the cytoplasm. It carries out the reaction RNA(n+1) + phosphate = RNA(n) + a ribonucleoside 5'-diphosphate. In terms of biological role, involved in mRNA degradation. Catalyzes the phosphorolysis of single-stranded polyribonucleotides processively in the 3'- to 5'-direction. The sequence is that of Polyribonucleotide nucleotidyltransferase from Parasynechococcus marenigrum (strain WH8102).